Reading from the N-terminus, the 306-residue chain is D-alanine--D-alanine ligase B (306 aa).

Residues glutamate 15 and serine 150 contribute to the active site. The region spanning 101 to 303 (KLLWQGAGLP…FSQLVVRILE (203 aa)) is the ATP-grasp domain. Residue 134–189 (ISSLGLPVIVKPSREGSSVGMSKVVAENALQDALRLAFQHDEEVLIEKWLSGPEFT) participates in ATP binding. Aspartate 257, glutamate 270, and asparagine 272 together coordinate Mg(2+). Serine 281 is a catalytic residue.

Belongs to the D-alanine--D-alanine ligase family. Monomer. The cofactor is Mg(2+). Mn(2+) serves as cofactor.

It is found in the cytoplasm. The catalysed reaction is 2 D-alanine + ATP = D-alanyl-D-alanine + ADP + phosphate + H(+). It participates in cell wall biogenesis; peptidoglycan biosynthesis. Cell wall formation. In Escherichia coli O6:H1 (strain CFT073 / ATCC 700928 / UPEC), this protein is D-alanine--D-alanine ligase B.